A 210-amino-acid chain; its full sequence is Endonuclease III (210 aa).

One can recognise a HhH domain in the interval 108–127; sequence RIELESLPGVGRKTANIILN. C187, C194, C197, and C203 together coordinate [4Fe-4S] cluster.

The protein belongs to the Nth/MutY family. Requires [4Fe-4S] cluster as cofactor.

It carries out the reaction 2'-deoxyribonucleotide-(2'-deoxyribose 5'-phosphate)-2'-deoxyribonucleotide-DNA = a 3'-end 2'-deoxyribonucleotide-(2,3-dehydro-2,3-deoxyribose 5'-phosphate)-DNA + a 5'-end 5'-phospho-2'-deoxyribonucleoside-DNA + H(+). DNA repair enzyme that has both DNA N-glycosylase activity and AP-lyase activity. The DNA N-glycosylase activity releases various damaged pyrimidines from DNA by cleaving the N-glycosidic bond, leaving an AP (apurinic/apyrimidinic) site. The AP-lyase activity cleaves the phosphodiester bond 3' to the AP site by a beta-elimination, leaving a 3'-terminal unsaturated sugar and a product with a terminal 5'-phosphate. In Buchnera aphidicola subsp. Acyrthosiphon pisum (strain APS) (Acyrthosiphon pisum symbiotic bacterium), this protein is Endonuclease III.